The primary structure comprises 638 residues: Guanylate-binding protein 7 (638 aa).

Residues 1-310 (MASEIHMPGP…DAINSGATPC (310 aa)) form a GTPase domain (Globular) region. One can recognise a GB1/RHD3-type G domain in the interval 35–277 (TQPVVVVAIV…FCSYIFTHAK (243 aa)). Residues 45–52 (GLYRTGKS), 67–69 (LGC), and 97–101 (DTEGL) each bind GTP. The tract at residues 311 to 638 (LENAMAVLAQ…LRNPGKKIIS (328 aa)) is interaction with the CYBA-CYBB complex. Residues 590–638 (PSVFSQILDVAGSIFIAALPGAAKLVDLGMKILSSLCNRLRNPGKKIIS) form a C-terminal tail; required for its localization to cytoplasmic vesicle region.

The protein belongs to the TRAFAC class dynamin-like GTPase superfamily. GB1/RHD3 GTPase family. GB1 subfamily. In terms of assembly, monomer and dimer. Interacts with CYBA, CYBA-CYBB complex and ATG4B. Interacts (via GB1/RHD3-type G domain) with NCF2 and NCF2-NCF4 complex.

The protein localises to the cytoplasmic vesicle membrane. It catalyses the reaction GTP + H2O = GDP + phosphate + H(+). The enzyme catalyses GDP + H2O = GMP + phosphate + H(+). Interferon (IFN)-inducible GTPase that plays important roles in innate immunity against a diverse range of bacterial, viral and protozoan pathogens. Hydrolyzes GTP to GMP in two consecutive cleavage reactions and predominantly uses GTP and not GDP or GMP as the substrate. Following infection, recruited to the pathogen-containing vacuoles or vacuole-escaped bacteria and acts as a positive regulator of inflammasome assembly by promoting the release of inflammasome ligands from bacteria. Acts by promoting lysis of pathogen-containing vacuoles, releasing pathogens into the cytosol. Following pathogen release in the cytosol, promotes recruitment of proteins that mediate bacterial cytolysis: this liberates ligands that are detected by inflammasomes, such as lipopolysaccharide (LPS) that activates the non-canonical CASP4/CASP11 inflammasome or double-stranded DNA (dsDNA) that activates the AIM2 inflammasome. Also promotes IFN-gamma-mediated host defense against bacterial infections by regulating oxidative responses and bacteriolytic peptide generation. May help to assemble NADPH oxidase on phagosomal membranes by acting as a bridging protein between NADPH oxidase cytosolic subunits NCF2-NCF4 and the membrane subunits CYBA-CYBB. Participates along with GBP1 in trafficking monoubiquinated protein cargo to autolysosomes for generating ubiquitin-derived antimicrobial peptides. Facilitates influenza A virus replication by inhibiting the activation of NF-kappaB and JAK-STAT signaling pathways and the expression of type I, type III interferons and pro-inflammatory cytokines. Confers protection to several pathogens, including the bacterial pathogens Listeria monocytogenes and Mycobacterium bovis BCG as well as the protozoan pathogen Toxoplasma gondii. Required for disruption of the parasitophorous vacuole formed following T.gondii infection and subsequent killing of the parasite. This chain is Guanylate-binding protein 7 (GBP7), found in Homo sapiens (Human).